A 176-amino-acid polypeptide reads, in one-letter code: MKNKTEYYDQFIAKVPNFPKKGILFYDITSVLLKPEVYTSLINEVYSFYNLKKIDCIAVVESRGYLIGAPLSLKMQLPLVLIRKEGKLPREVFGEEYELEYGFGRIEVHKDDVRMYSNILLIDDILATGGTLKSSAILLERAGGRVKNIFCFIELCGINGRRILEGYKVNSLVRYD.

This sequence belongs to the purine/pyrimidine phosphoribosyltransferase family. Homodimer.

It localises to the cytoplasm. The enzyme catalyses AMP + diphosphate = 5-phospho-alpha-D-ribose 1-diphosphate + adenine. It participates in purine metabolism; AMP biosynthesis via salvage pathway; AMP from adenine: step 1/1. Its function is as follows. Catalyzes a salvage reaction resulting in the formation of AMP, that is energically less costly than de novo synthesis. The protein is Adenine phosphoribosyltransferase of Borreliella afzelii (strain PKo) (Borrelia afzelii).